Consider the following 519-residue polypeptide: Alkaline phosphatase, tissue-nonspecific isozyme (519 aa).

A signal peptide spans 1-16 (MKAFLLTLLAQLCSAS). Asp-59 contributes to the Mg(2+) binding site. 2 residues coordinate Zn(2+): Asp-59 and Ser-109. Ser-109 acts as the Phosphoserine intermediate in catalysis. Residues Cys-138 and Cys-200 are joined by a disulfide bond. Residue Asn-139 is glycosylated (N-linked (GlcNAc...) asparagine). Thr-172 lines the Mg(2+) pocket. Asn-229 is a glycosylation site (N-linked (GlcNAc...) asparagine). Glu-234 contributes to the Ca(2+) binding site. Asn-278 carries an N-linked (GlcNAc...) asparagine glycan. The Ca(2+) site is built by Phe-289 and Glu-290. Asn-302 carries N-linked (GlcNAc...) asparagine glycosylation. Asp-305 serves as a coordination point for Ca(2+). Glu-331 is a Mg(2+) binding site. Zn(2+)-binding residues include Asp-336, His-340, Asp-377, and His-378. An N-linked (GlcNAc...) asparagine glycan is attached at Asn-429. Residue His-453 participates in Zn(2+) binding. Cys-488 and Cys-496 form a disulfide bridge. Ser-498 carries GPI-anchor amidated serine lipidation. A propeptide spans 499-519 (AARPAATATLLPVLLLLLLLC) (removed in mature form).

The protein belongs to the alkaline phosphatase family. As to quaternary structure, homodimer. Mg(2+) serves as cofactor. Zn(2+) is required as a cofactor. The cofactor is Ca(2+).

The protein localises to the cell membrane. It localises to the extracellular vesicle membrane. It carries out the reaction a phosphate monoester + H2O = an alcohol + phosphate. It catalyses the reaction diphosphate + H2O = 2 phosphate + H(+). The catalysed reaction is pyridoxal 5'-phosphate + H2O = pyridoxal + phosphate. The enzyme catalyses phosphoethanolamine + H2O = ethanolamine + phosphate. It carries out the reaction ATP + H2O = ADP + phosphate + H(+). It catalyses the reaction ADP + H2O = AMP + phosphate + H(+). The catalysed reaction is AMP + H2O = adenosine + phosphate. Functionally, alkaline phosphatase that metabolizes various phosphate compounds and plays a key role in skeletal mineralization and adaptive thermogenesis. Has broad substrate specificity and can hydrolyze a considerable variety of compounds: however, only a few substrates, such as diphosphate (inorganic pyrophosphate; PPi) and pyridoxal 5'-phosphate (PLP) are natural substrates. Plays an essential role in skeletal and dental mineralization via its ability to hydrolyze extracellular diphosphate, a potent mineralization inhibitor, to phosphate: it thereby promotes hydroxyapatite crystal formation and increases inorganic phosphate concentration. Catalyzes dephosphorylation of PLP to pyridoxal (PL), the transportable form of vitamin B6, in order to provide a sufficient amount of PLP in the brain, an essential cofactor for enzymes catalyzing the synthesis of diverse neurotransmitters. Additionally, also able to mediate ATP degradation in a stepwise manner to adenosine, thereby regulating the availability of ligands for purinergic receptors. Involved in the establishment and growth of feather germs. This is Alkaline phosphatase, tissue-nonspecific isozyme (ALPL) from Gallus gallus (Chicken).